A 408-amino-acid chain; its full sequence is Cytotoxic granule-associated RNA binding protein tiar-1 (408 aa).

RRM domains lie at 46 to 121 (RTLY…WAVE), 135 to 213 (FHVF…WATR), and 241 to 312 (TSVY…WGKT).

Expressed in the germline and also in somatic tissues. Expressed in Ggonads and oocytes. Expression is slightly reduced in the most proximal oocytes, especially the -1 oocyte. Aggregates mostly in the head neurons, muscles, intestine, vulval and hypodermal cells during heat shock. Expressed only in the intestine as a response to heat shock, starvation and dietary restriction.

Its subcellular location is the cytoplasm. It is found in the nucleus. The protein localises to the stress granule. Acts downstream of ced-9 in the induction of germline apoptosis under different stress conditions including starvation, osmotic, oxidative, heat shock and UV stress. Plays a role in the formation of stress granules in response to heat shock and oxidative stress but not in response to osmotic stress. Required for the formation of stress granules in the core gonad but may not play a critical role in this process in the oocytes. Plays an important role in the formation of stress granules in the embryo. Protects female germ cells and embryos from heat shock. The sequence is that of Cytotoxic granule-associated RNA binding protein tiar-1 from Caenorhabditis elegans.